The primary structure comprises 197 residues: Dephospho-CoA kinase (197 aa).

The region spanning 5 to 197 is the DPCK domain; the sequence is RLGLTGSIGM…IAHIRETADA (193 aa). 13-18 contributes to the ATP binding site; the sequence is GMGKST.

Belongs to the CoaE family.

It localises to the cytoplasm. The catalysed reaction is 3'-dephospho-CoA + ATP = ADP + CoA + H(+). It functions in the pathway cofactor biosynthesis; coenzyme A biosynthesis; CoA from (R)-pantothenate: step 5/5. Functionally, catalyzes the phosphorylation of the 3'-hydroxyl group of dephosphocoenzyme A to form coenzyme A. The polypeptide is Dephospho-CoA kinase (Cereibacter sphaeroides (strain ATCC 17023 / DSM 158 / JCM 6121 / CCUG 31486 / LMG 2827 / NBRC 12203 / NCIMB 8253 / ATH 2.4.1.) (Rhodobacter sphaeroides)).